The chain runs to 210 residues: SAP domain-containing ribonucleoprotein (210 aa).

Alanine 2 carries the post-translational modification N-acetylalanine. In terms of domain architecture, SAP spans 8 to 42; the sequence is LHKLKLAELKQECLARGLETKGIKQDLINRLQAYL. An N6-acetyllysine modification is found at lysine 10. Acidic residues predominate over residues 45–64; the sequence is HAEEEANEEDVLGDETEEEE. The disordered stretch occupies residues 45-87; that stretch reads HAEEEANEEDVLGDETEEEEPKPIELPVKEEEPPEKVVDMASE. A compositionally biased stretch (basic and acidic residues) spans 65–87; sequence PKPIELPVKEEEPPEKVVDMASE. N6-acetyllysine is present on lysine 142. The segment at 161–210 is disordered; it reads VSSISRKSEDDEKLKKRKERFGIVTSSAGTGTTEDTEAKKRKRAERFGIA. A Phosphoserine modification is found at serine 163. Residues 184-193 are compositionally biased toward polar residues; the sequence is VTSSAGTGTT.

Belongs to the SAP domain-containing ribonucleoprotein family. In terms of assembly, interacts with DDX39A. Interacts with FUS. Interacts (via the C-terminal domain) with DDX39B; the interaction is direct and facilitates RNA binding of DDX39B. Component of the transcription/export (TREX) complex at least composed of ALYREF/THOC4, DDX39B, SARNP/CIP29, CHTOP and the THO subcomplex; TREX seems to have dynamic structure involving ATP-dependent remodeling; in the complex interacts directly with DDX39B in a ATP-dependent manner which bridges it to ALYREF/THOC4.

The protein resides in the nucleus. The protein localises to the nucleus speckle. Its function is as follows. Binds both single-stranded and double-stranded DNA with higher affinity for the single-stranded form. Specifically binds to scaffold/matrix attachment region DNA. Also binds single-stranded RNA. Enhances RNA unwinding activity of DDX39A. May participate in important transcriptional or translational control of cell growth, metabolism and carcinogenesis. Component of the TREX complex which is thought to couple mRNA transcription, processing and nuclear export, and specifically associates with spliced mRNA and not with unspliced pre-mRNA. The TREX complex is recruited to spliced mRNAs by a transcription-independent mechanism, binds to mRNA upstream of the exon-junction complex (EJC) and is recruited in a splicing- and cap-dependent manner to a region near the 5' end of the mRNA where it functions in mRNA export to the cytoplasm via the TAP/NXF1 pathway. Associates with DDX39B, which facilitates RNA binding of DDX39B and likely plays a role in mRNA export. In Rattus norvegicus (Rat), this protein is SAP domain-containing ribonucleoprotein (Sarnp).